Here is a 227-residue protein sequence, read N- to C-terminus: UPF0758 protein lpg2489 (227 aa).

The region spanning Arg102–Val225 is the MPN domain. Residues His173, His175, and Asp186 each coordinate Zn(2+). The JAMM motif signature appears at His173–Asp186.

It belongs to the UPF0758 family.

This Legionella pneumophila subsp. pneumophila (strain Philadelphia 1 / ATCC 33152 / DSM 7513) protein is UPF0758 protein lpg2489.